The following is a 220-amino-acid chain: MELYLDTANVAEVERLARIFPIAGVTTNPSIVAASKESIWDVLPRLQNAIGEEGTLFAQTMSRDAKGMVEEAKRLNNAIPGIVVKIPVTAEGLAAINLLKKEGIVTLGTAVYSASQGLLAALAGAKYVAPYVNRVDAQGGDGIRMVQELQTLLEHHAPDSMVLAASFKTPRQALDCLLAGCQAITLPLDVAQQMLNTPAVESAIERFEQDWKNAFGNLNL.

The active-site Schiff-base intermediate with substrate is Lys-85.

It belongs to the transaldolase family. Type 3A subfamily. In terms of assembly, homodecamer.

Its subcellular location is the cytoplasm. The enzyme catalyses beta-D-fructose 6-phosphate = dihydroxyacetone + D-glyceraldehyde 3-phosphate. Catalyzes the reversible formation of fructose 6-phosphate from dihydroxyacetone and D-glyceraldehyde 3-phosphate via an aldolization reaction. In Salmonella schwarzengrund (strain CVM19633), this protein is Fructose-6-phosphate aldolase.